The primary structure comprises 354 residues: MSGFVVSKPEQSHHRLFDFAKTAIINIFAHPYATVCELYCGGAPETDKWEAAPIGHYIGIDTSSGISSVREAWESQRKNYDVEFFEADPSKDDFEIQLQKKLEQADLVSCWRHLQLCFETEESARRLLTNVACLLKPGGYFFGITPDSSTIWAKYQKNVEAYHNRSGAKPNVFPNYIRSESYMITFELEEEKFPLFGKRYQLKFSGDNASEDHCLVHFPSLIRLAREAGLEFVEIQSLTDFYDDNRAQFASLLMNAGPNFVDPRGKLLPRAFDLLGLYATFIFQKPDPDIEPPLTTPIPFESSNNHDERELPVITVITDASAPAEDPSQGLGKIVEQKGILGPGPADLRFSEAI.

Residues 8 to 286 (KPEQSHHRLF…LYATFIFQKP (279 aa)) enclose the mRNA cap 0 methyltransferase domain. S-adenosyl-L-methionine-binding positions include Lys21, Asp61, and 88-89 (DP).

This sequence belongs to the class I-like SAM-binding methyltransferase superfamily. mRNA cap 0 methyltransferase family.

The protein resides in the nucleus. The catalysed reaction is a 5'-end (5'-triphosphoguanosine)-ribonucleoside in mRNA + S-adenosyl-L-methionine = a 5'-end (N(7)-methyl 5'-triphosphoguanosine)-ribonucleoside in mRNA + S-adenosyl-L-homocysteine. In terms of biological role, mRNA capping methyltransferase that methylates the N7 position of the added guanosine to the 5'-cap structure of mRNAs. Binds RNA containing 5'-terminal GpppC. This is mRNA cap guanine-N(7) methyltransferase 2 from Arabidopsis thaliana (Mouse-ear cress).